Here is a 517-residue protein sequence, read N- to C-terminus: NADH-quinone oxidoreductase subunit N (517 aa).

14 helical membrane-spanning segments follow: residues 14 to 34, 40 to 60, 77 to 97, 131 to 151, 154 to 174, 189 to 209, 238 to 258, 272 to 292, 306 to 326, 334 to 354, 362 to 382, 404 to 424, 451 to 471, and 481 to 501; these read LAPTLILLGAALVGVLVEAFV, HMVQLTVAMLAVLSALTMVVV, GPALFLQGAILVLAAMALLLI, ATEVYPLTSFAVGGMLIFVAA, LLTMFIALEVLSLPLYLLCAL, YFLLGAYASAFFLFGVALVYG, VLLFGGMALIAIGLLFKAAAA, PTPITGFMAACTKVAAFGALL, FTPILGVVAVLTMLVGAVLAV, LLAYSSIANAGYLLVGVLAPS, MFYLVAYGFSVLAAFAVVTLV, FYAGLFTFILLAFAGIPLTSG, SMVLAFPYLRVVVLMWLSEPG, and GWLTSAALTIGVVATLVLGVV.

Belongs to the complex I subunit 2 family. As to quaternary structure, NDH-1 is composed of 14 different subunits. Subunits NuoA, H, J, K, L, M, N constitute the membrane sector of the complex.

The protein resides in the cell membrane. It carries out the reaction a quinone + NADH + 5 H(+)(in) = a quinol + NAD(+) + 4 H(+)(out). NDH-1 shuttles electrons from NADH, via FMN and iron-sulfur (Fe-S) centers, to quinones in the respiratory chain. The immediate electron acceptor for the enzyme in this species is believed to be a menaquinone. Couples the redox reaction to proton translocation (for every two electrons transferred, four hydrogen ions are translocated across the cytoplasmic membrane), and thus conserves the redox energy in a proton gradient. This chain is NADH-quinone oxidoreductase subunit N, found in Salinispora arenicola (strain CNS-205).